Consider the following 266-residue polypeptide: Small ribosomal subunit protein uS3 (266 aa).

Residues 39–107 form the KH type-2 domain; it reads VREYLKKKLK…PVHVNIEEIR (69 aa). Positions 214–266 are disordered; the sequence is PVVEEVTEDKRPRRNARPGDRRPRRDGEGGAPGARRGGPRRGAGKPEDGKTGE. 2 stretches are compositionally biased toward basic and acidic residues: residues 230-241 and 257-266; these read RPGDRRPRRDGE and GKPEDGKTGE.

This sequence belongs to the universal ribosomal protein uS3 family. In terms of assembly, part of the 30S ribosomal subunit. Forms a tight complex with proteins S10 and S14.

In terms of biological role, binds the lower part of the 30S subunit head. Binds mRNA in the 70S ribosome, positioning it for translation. This Burkholderia mallei (strain NCTC 10247) protein is Small ribosomal subunit protein uS3.